A 226-amino-acid polypeptide reads, in one-letter code: Peroxynitrite isomerase (226 aa).

Residues 21-27 (GSWEGQG) carry the GXWXGXG motif. His191 provides a ligand contact to heme b. The segment at 201 to 226 (SAAEGRLAPGAERPRGAGGRKQGEQS) is disordered.

This sequence belongs to the nitrobindin family. As to quaternary structure, homodimer. Heme b is required as a cofactor.

The enzyme catalyses peroxynitrite = nitrate. It participates in nitrogen metabolism. Functionally, heme-binding protein able to scavenge peroxynitrite and to protect free L-tyrosine against peroxynitrite-mediated nitration, by acting as a peroxynitrite isomerase that converts peroxynitrite to nitrate. Therefore, this protein likely plays a role in peroxynitrite sensing and in the detoxification of reactive nitrogen and oxygen species (RNS and ROS, respectively). Is able to bind nitric oxide (NO) in vitro, but may act as a sensor of peroxynitrite levels in vivo. The protein is Peroxynitrite isomerase of Micrococcus luteus (strain ATCC 4698 / DSM 20030 / JCM 1464 / CCM 169 / CCUG 5858 / IAM 1056 / NBRC 3333 / NCIMB 9278 / NCTC 2665 / VKM Ac-2230) (Micrococcus lysodeikticus).